The following is a 27-amino-acid chain: Putative phosphoglycerate kinase (27 aa).

This sequence belongs to the phosphoglycerate kinase family. Monomer. It depends on Mg(2+) as a cofactor.

The catalysed reaction is (2R)-3-phosphoglycerate + ATP = (2R)-3-phospho-glyceroyl phosphate + ADP. The polypeptide is Putative phosphoglycerate kinase (Pinus strobus (Eastern white pine)).